Reading from the N-terminus, the 1043-residue chain is Rho GTPase-activating protein gacZ (1043 aa).

The tract at residues 1–44 (MTTTNTSIFGPRVNNSKFNNNNNNNNNNNNNNNNTSNNNNSNII) is disordered. The segment covering 14-44 (NNSKFNNNNNNNNNNNNNNNNTSNNNNSNII) has biased composition (low complexity). Residues Cys71, Cys74, Cys82, Cys85, Cys91, His95, His103, and Cys107 each coordinate Zn(2+). The MYND-type; atypical zinc-finger motif lies at 71-107 (CVICKSKNVQVCTGCLMVYYCGAEHQNIDWPNHKSLC). 6 disordered regions span residues 137 to 163 (SGNR…NNNN), 199 to 532 (HLQQ…NNSN), 546 to 594 (DGLS…NGNR), 614 to 690 (FYQS…TNNN), 706 to 772 (NTSQ…QLSA), and 801 to 842 (NKVS…NNNN). Over residues 201-225 (QQQIQQTQQTQQQPPPTTTSIPTQP) the composition is skewed to low complexity. Over residues 241–253 (SFKSSSSGDNTPI) the composition is skewed to polar residues. 2 stretches are compositionally biased toward low complexity: residues 254 to 293 (NQSP…NMSG) and 307 to 411 (NSIN…TNEE). The segment covering 453–466 (GTLKQSSSSDSIYF) has biased composition (polar residues). 2 stretches are compositionally biased toward low complexity: residues 467–532 (NNNN…NNSN) and 547–594 (GLSY…NGNR). The segment covering 615–625 (YQSNKNQSNGY) has biased composition (polar residues). Acidic residues predominate over residues 644-671 (ENDDSHEECDDDDDDDDGGGQDGDDGLD). 4 stretches are compositionally biased toward low complexity: residues 726–736 (DTQSQSTNSTT), 752–771 (SSDD…SQLS), 801–821 (NKVS…NNNN), and 829–842 (NNNN…NNNN). A coiled-coil region spans residues 825–852 (DHNENNNNNNNNINNNNNNNNNNIENII). The region spanning 855–1043 (IPLEEAVKKS…FGIQTYNYNS (189 aa)) is the Rho-GAP domain.

It localises to the cytoplasm. Its function is as follows. Rho GTPase-activating protein involved in the signal transduction pathway. The chain is Rho GTPase-activating protein gacZ (gacZ) from Dictyostelium discoideum (Social amoeba).